The following is a 132-amino-acid chain: Small ribosomal subunit protein uS8 (132 aa).

The protein belongs to the universal ribosomal protein uS8 family. Part of the 30S ribosomal subunit. Contacts proteins S5 and S12.

Functionally, one of the primary rRNA binding proteins, it binds directly to 16S rRNA central domain where it helps coordinate assembly of the platform of the 30S subunit. This is Small ribosomal subunit protein uS8 (rpsH) from Caldanaerobacter subterraneus subsp. tengcongensis (strain DSM 15242 / JCM 11007 / NBRC 100824 / MB4) (Thermoanaerobacter tengcongensis).